The chain runs to 521 residues: (+)-kolavenyl diphosphate synthase (521 aa).

Residues D311 and D313 each coordinate Mg(2+). The short motif at 311–314 is the DXDD motif element; sequence DGDD.

The protein belongs to the terpene synthase family. It depends on Mg(2+) as a cofactor.

It carries out the reaction (2E,6E,10E)-geranylgeranyl diphosphate = (+)-kolavenyl diphosphate. In terms of biological role, involved in the biosynthesis of (+)-O-methylkolavelool. Catalyzes the conversion of geranylgeranyl diphosphate into (+)-kolavenyl diphosphate. The protein is (+)-kolavenyl diphosphate synthase of Herpetosiphon aurantiacus (strain ATCC 23779 / DSM 785 / 114-95).